We begin with the raw amino-acid sequence, 219 residues long: MSETAPAAPAAPAPAEKTPVKKKARKSAGAAKRKASGPPVSELITKAVAASKERSGVSLAALKKALAAAGYDVEKNNSRIKLGLKSLVSKGTLVQTKGTGASGSFKLNKKAASGEAKPKAKKAGAAKAKKPAGAAKKPKKATGAATPKKSAKKTPKKAKKPAAAAGAKKAKSPKKAKAAKPKKAPKSPAKAKAVKPKAAKPKTAKPKAAKPKKAAAKKK.

The span at 1 to 15 (MSETAPAAPAAPAPA) shows a compositional bias: low complexity. The tract at residues 1–41 (MSETAPAAPAAPAPAEKTPVKKKARKSAGAAKRKASGPPVS) is disordered. Ser-2 is modified (N-acetylserine). Residue Ser-2 is modified to Phosphoserine. An N6-acetyllysine modification is found at Lys-17. The residue at position 18 (Thr-18) is a Phosphothreonine. Residues 20–35 (VKKKARKSAGAAKRKA) are compositionally biased toward basic residues. At Lys-26 the chain carries N6-acetyllysine; alternate. Residue Lys-26 is modified to N6-methyllysine; alternate. Lys-34 bears the N6-(beta-hydroxybutyryl)lysine; alternate mark. Lys-34 carries the N6-succinyllysine; alternate modification. Ser-36 carries the post-translational modification Phosphoserine. The region spanning 36–109 (SGPPVSELIT…GASGSFKLNK (74 aa)) is the H15 domain. Lys-52 carries the post-translational modification N6-(beta-hydroxybutyryl)lysine. A Citrulline modification is found at Arg-54. Residues Lys-64, Lys-85, Lys-90, and Lys-106 each carry the N6-(beta-hydroxybutyryl)lysine modification. A disordered region spans residues 92–219 (TLVQTKGTGA…KPKKAAAKKK (128 aa)). The segment covering 119-140 (KAKKAGAAKAKKPAGAAKKPKK) has biased composition (basic residues). A Phosphothreonine modification is found at Thr-146. Basic residues-rich tracts occupy residues 149 to 160 (KSAKKTPKKAKK) and 168 to 185 (KKAKSPKKAKAAKPKKAP). At Ser-150 the chain carries ADP-ribosylserine. Ser-187 carries the post-translational modification Phosphoserine. Positions 192-219 (KAVKPKAAKPKTAKPKAAKPKKAAAKKK) are enriched in basic residues.

Belongs to the histone H1/H5 family. In terms of processing, H1 histones are progressively phosphorylated during the cell cycle, becoming maximally phosphorylated during late G2 phase and M phase, and being dephosphorylated sharply thereafter. Post-translationally, acetylated at Lys-26. Deacetylated at Lys-26 by SIRT1. Citrullination at Arg-54 (H1R54ci) by PADI4 takes place within the DNA-binding site of H1 and results in its displacement from chromatin and global chromatin decondensation, thereby promoting pluripotency and stem cell maintenance. In terms of processing, ADP-ribosylated on Ser-150 in response to DNA damage.

The protein localises to the nucleus. Its subcellular location is the chromosome. In terms of biological role, histone H1 protein binds to linker DNA between nucleosomes forming the macromolecular structure known as the chromatin fiber. Histones H1 are necessary for the condensation of nucleosome chains into higher-order structured fibers. Also acts as a regulator of individual gene transcription through chromatin remodeling, nucleosome spacing and DNA methylation. The chain is Histone H1.4 from Homo sapiens (Human).